Here is a 220-residue protein sequence, read N- to C-terminus: MAEQQDARVYSDRRHEMVEQLKRYGITNSKVLEAFNAVERHLFFDAAYRDFAYDDGAFSIGYGQTISQPYTVAYMTSMLVERCPSGKVLEIGTGSGYQAAILEYMGYSVYTVERIEALFRRSSLILGALGLTVHQILGDGTLGWEEEAPYSGIIVTAGAPEPPSALLGQLAEEGVLIIPIGDSTGQRMTVFTRRGEMFQREEFHTFAFVPLIGREGWREE.

The active site involves Ser67.

The protein belongs to the methyltransferase superfamily. L-isoaspartyl/D-aspartyl protein methyltransferase family.

The protein resides in the cytoplasm. The catalysed reaction is [protein]-L-isoaspartate + S-adenosyl-L-methionine = [protein]-L-isoaspartate alpha-methyl ester + S-adenosyl-L-homocysteine. Catalyzes the methyl esterification of L-isoaspartyl residues in peptides and proteins that result from spontaneous decomposition of normal L-aspartyl and L-asparaginyl residues. It plays a role in the repair and/or degradation of damaged proteins. The polypeptide is Protein-L-isoaspartate O-methyltransferase (Chlorobium phaeobacteroides (strain BS1)).